Reading from the N-terminus, the 119-residue chain is Ribonuclease P protein component (119 aa).

Belongs to the RnpA family. In terms of assembly, consists of a catalytic RNA component (M1 or rnpB) and a protein subunit.

The enzyme catalyses Endonucleolytic cleavage of RNA, removing 5'-extranucleotides from tRNA precursor.. In terms of biological role, RNaseP catalyzes the removal of the 5'-leader sequence from pre-tRNA to produce the mature 5'-terminus. It can also cleave other RNA substrates such as 4.5S RNA. The protein component plays an auxiliary but essential role in vivo by binding to the 5'-leader sequence and broadening the substrate specificity of the ribozyme. This Listeria welshimeri serovar 6b (strain ATCC 35897 / DSM 20650 / CCUG 15529 / CIP 8149 / NCTC 11857 / SLCC 5334 / V8) protein is Ribonuclease P protein component.